Consider the following 108-residue polypeptide: Ig kappa chain V-V region HP 124E1 (108 aa).

The tract at residues 1-23 (DIQMTQTTSSLSASLGDRVTISC) is framework-1. Cysteine 23 and cysteine 88 are joined by a disulfide. The complementarity-determining-1 stretch occupies residues 24–34 (RASQDINNYLN). The tract at residues 35-49 (WYQQKPDGTVKLLIY) is framework-2. The segment at 50–56 (YTSRLHS) is complementarity-determining-2. Residues 57 to 88 (GVPSRFSGSGSGTDYSLTISNLEQEDIATYFC) are framework-3. The segment at 89–97 (QQGKTLPRT) is complementarity-determining-3. The segment at 98-108 (FGGGTKLEIKR) is framework-4.

This is Ig kappa chain V-V region HP 124E1 from Mus musculus (Mouse).